The primary structure comprises 199 residues: Recombination protein RecR (199 aa).

The C4-type zinc finger occupies 58–73; sequence CVNCGNIGTGDLCEIC. The region spanning 81 to 176 is the Toprim domain; it reads GEICVVEDVA…TLSSLAQGVP (96 aa).

The protein belongs to the RecR family.

In terms of biological role, may play a role in DNA repair. It seems to be involved in an RecBC-independent recombinational process of DNA repair. It may act with RecF and RecO. The protein is Recombination protein RecR of Jannaschia sp. (strain CCS1).